The primary structure comprises 153 residues: Deoxyuridine 5'-triphosphate nucleotidohydrolase (153 aa).

Substrate is bound by residues 65-67 (RSG), Asn78, and 82-84 (TID). Residues 132–153 (MTQRGEGGFGHTGISAVHPRTH) are disordered.

It belongs to the dUTPase family. It depends on Mg(2+) as a cofactor.

The enzyme catalyses dUTP + H2O = dUMP + diphosphate + H(+). Its pathway is pyrimidine metabolism; dUMP biosynthesis; dUMP from dCTP (dUTP route): step 2/2. This enzyme is involved in nucleotide metabolism: it produces dUMP, the immediate precursor of thymidine nucleotides and it decreases the intracellular concentration of dUTP so that uracil cannot be incorporated into DNA. This Chlorobium limicola (strain DSM 245 / NBRC 103803 / 6330) protein is Deoxyuridine 5'-triphosphate nucleotidohydrolase.